The chain runs to 574 residues: Potassium-transporting ATPase potassium-binding subunit (574 aa).

10 helical membrane-spanning segments follow: residues 7-27 (IELG…GTHL), 65-85 (IEYA…SYLI), 136-156 (FGLA…AAAL), 175-195 (LIRI…IILL), 264-284 (FVEM…FGLS), 292-312 (WSIW…CFIF), 390-410 (GLYG…LMIG), 427-447 (MAVL…ALAL), 494-514 (LLLG…ILAI), and 534-554 (GWLF…LNFF).

The protein belongs to the KdpA family. The system is composed of three essential subunits: KdpA, KdpB and KdpC.

It is found in the cell inner membrane. Part of the high-affinity ATP-driven potassium transport (or Kdp) system, which catalyzes the hydrolysis of ATP coupled with the electrogenic transport of potassium into the cytoplasm. This subunit binds the periplasmic potassium ions and delivers the ions to the membrane domain of KdpB through an intramembrane tunnel. The chain is Potassium-transporting ATPase potassium-binding subunit from Methylacidiphilum infernorum (isolate V4) (Methylokorus infernorum (strain V4)).